The sequence spans 363 residues: Ribonuclease P protein subunit p40 (363 aa).

As to quaternary structure, component of nuclear RNase P and RNase MRP ribonucleoproteins. RNase P consists of a catalytic RNA moiety and about 10 protein subunits; POP1, POP4, POP5, POP7, RPP14, RPP21, RPP25, RPP30, RPP38 and RPP40. Within the RNase P complex, POP1, POP7 and RPP25 form the 'finger' subcomplex, POP5, RPP14, RPP40 and homodimeric RPP30 form the 'palm' subcomplex, and RPP21, POP4 and RPP38 form the 'wrist' subcomplex. All subunits of the RNase P complex interact with the catalytic RNA. Several subunits of RNase P are also part of the RNase MRP complex. RNase MRP consists of a catalytic RNA moiety and about 8 protein subunits; POP1, POP7, RPP25, RPP30, RPP38, RPP40 and possibly also POP4 and POP5.

It localises to the nucleus. Its subcellular location is the nucleolus. In terms of biological role, component of ribonuclease P, a ribonucleoprotein complex that generates mature tRNA molecules by cleaving their 5'-ends. Also a component of the MRP ribonuclease complex, which cleaves pre-rRNA sequences. The protein is Ribonuclease P protein subunit p40 (Rpp40) of Rattus norvegicus (Rat).